The sequence spans 92 residues: Small ribosomal subunit protein uS19 (92 aa).

The disordered stretch occupies residues 73–92 (EFSPSRTYYGHAADKKAKRR).

The protein belongs to the universal ribosomal protein uS19 family.

Protein S19 forms a complex with S13 that binds strongly to the 16S ribosomal RNA. This is Small ribosomal subunit protein uS19 from Maricaulis maris (strain MCS10) (Caulobacter maris).